We begin with the raw amino-acid sequence, 408 residues long: AA9 family lytic polysaccharide monooxygenase A (408 aa).

Residues 1–20 form the signal peptide; the sequence is MKTTTYSLLALAAASKLASA. Residues His21 and His103 each coordinate Cu(2+). A disulfide bridge links Cys63 with Cys186. N-linked (GlcNAc...) asparagine glycosylation is present at Asn151. Residue His172 participates in O2 binding. Tyr183 contributes to the Cu(2+) binding site. N-linked (GlcNAc...) asparagine glycans are attached at residues Asn331 and Asn381. A CBM1 domain is found at 369–405; that stretch reads GVAKQYERCGGINHTGPTTCESGSVCKKWNPYYYQCV.

The protein belongs to the polysaccharide monooxygenase AA9 family. Cu(2+) is required as a cofactor.

It localises to the secreted. The enzyme catalyses [(1-&gt;4)-beta-D-glucosyl]n+m + reduced acceptor + O2 = 4-dehydro-beta-D-glucosyl-[(1-&gt;4)-beta-D-glucosyl]n-1 + [(1-&gt;4)-beta-D-glucosyl]m + acceptor + H2O.. Functionally, lytic polysaccharide monooxygenase (LPMO) that depolymerizes crystalline and amorphous polysaccharides via the oxidation of scissile alpha- or beta-(1-4)-glycosidic bonds, yielding C4 oxidation products. Catalysis by LPMOs requires the reduction of the active-site copper from Cu(II) to Cu(I) by a reducing agent and H(2)O(2) or O(2) as a cosubstrate. In Aspergillus kawachii (strain NBRC 4308) (White koji mold), this protein is AA9 family lytic polysaccharide monooxygenase A (eglD).